The primary structure comprises 699 residues: Kinesin-II 85 kDa subunit (699 aa).

The Kinesin motor domain occupies 10–342 (NVRVVVRCRP…LRYANRAKNI (333 aa)). 97 to 104 (GQTGTGKT) provides a ligand contact to ATP. A coiled-coil region spans residues 341 to 619 (NIKNKAKINE…EDIGEWQLKC (279 aa)). Disordered stretches follow at residues 369–415 (KQIS…LSPE), 432–456 (EEKK…ESEL), and 660–699 (GMKY…ALLQ). A compositionally biased stretch (acidic residues) spans 376-395 (EGLDDDEESGSEESGDEEAG). The segment covering 400 to 411 (KKKRKGKNPKRK) has biased composition (basic residues). Residues 620-699 (VAYTGNNMRK…MASSIDALLQ (80 aa)) are globular. Residues 667 to 679 (QGKSGRPKTSSGR) are compositionally biased toward polar residues.

It belongs to the TRAFAC class myosin-kinesin ATPase superfamily. Kinesin family. Kinesin II subfamily. In terms of assembly, heterotrimer of a 115 kDa subunit (KAP115) and two kinesin-like subunits of 95 kDa (KRP95) and 85 kDa (KRP85). The N-terminus is blocked.

Its subcellular location is the cytoplasm. The protein resides in the cytoskeleton. The polypeptide is Kinesin-II 85 kDa subunit (KRP85) (Strongylocentrotus purpuratus (Purple sea urchin)).